The chain runs to 160 residues: Transcription elongation factor GreA (160 aa).

The stretch at 1–72 (MAEKTYPMTL…QISSLETKIR (72 aa)) forms a coiled coil.

It belongs to the GreA/GreB family.

Its function is as follows. Necessary for efficient RNA polymerase transcription elongation past template-encoded arresting sites. The arresting sites in DNA have the property of trapping a certain fraction of elongating RNA polymerases that pass through, resulting in locked ternary complexes. Cleavage of the nascent transcript by cleavage factors such as GreA or GreB allows the resumption of elongation from the new 3'terminus. GreA releases sequences of 2 to 3 nucleotides. The protein is Transcription elongation factor GreA of Streptococcus pneumoniae serotype 4 (strain ATCC BAA-334 / TIGR4).